Consider the following 106-residue polypeptide: UPF0145 protein CPE0882 (106 aa).

Belongs to the UPF0145 family.

This is UPF0145 protein CPE0882 from Clostridium perfringens (strain 13 / Type A).